Here is a 184-residue protein sequence, read N- to C-terminus: GTP-binding protein Rheb (184 aa).

Lysine 8 participates in a covalent cross-link: Glycyl lysine isopeptide (Lys-Gly) (interchain with G-Cter in ubiquitin). Residues serine 16 and valine 17 each coordinate GDP. Serine 16 is a GTP binding site. Residues glycine 18, lysine 19, serine 20, serine 21, valine 32, tyrosine 35, threonine 38, asparagine 119, and aspartate 122 each contribute to the GTP site. 3 residues coordinate GDP: lysine 19, serine 20, and serine 21. Serine 20 lines the Mg(2+) pocket. An Effector region motif is present at residues 35-43 (YDPTIENTF). Threonine 38 serves as a coordination point for GDP. Threonine 38 is a Mg(2+) binding site. Residue aspartate 122 participates in GDP binding. At serine 130 the chain carries Phosphoserine; by MAPKAPK5. Alanine 150 provides a ligand contact to GDP. Residue alanine 150 coordinates GTP. Cysteine 181 carries the post-translational modification Cysteine methyl ester. Cysteine 181 is lipidated: S-farnesyl cysteine. The propeptide at 182 to 184 (SVM) is removed in mature form.

Belongs to the small GTPase superfamily. Rheb family. As to quaternary structure, associates with the mTORC1 complex (MTOR, MLST8 and RPTOR) in a guanyl nucleotide-independent manner. Interacts with TSC2. Interacts with MCRS1; the interaction maintains RHEB at the lysosome in its active GTP-bound form and prevents its interaction with the mTORC1 complex inhibitor TSC2, ensuring activation of the mTORC1 complex by RHEB. Interacts (when prenylated) with PDE6D; this promotes release from membranes. Post-translationally, farnesylation is important for efficiently activating mTORC1-mediated signaling. In terms of processing, polyubiquitinated in response to amino acid, promoting its interaction with MTOR and mTORC1 activation. Deubiquitination by ATXN3 promotes recruitment of the TSC-TBC complex and RHEB inactivation by TSC2. Monoubiquitinated at Lys-8 by RNF152, promoting its association with the TSC-TBC complex. Deubiquitinated at Lys-8 by USP4, promoting mTORC1 activation. Phosphorylation by MAPKAPK5 impairs GTP-binding and inactivation. In terms of tissue distribution, expressed at high levels in normal adult cortex as well as a number of peripheral tissues, including lung and intestine.

The protein localises to the endomembrane system. Its subcellular location is the lysosome membrane. The protein resides in the golgi apparatus membrane. It localises to the endoplasmic reticulum membrane. It is found in the cytoplasm. The protein localises to the cytosol. The enzyme catalyses GTP + H2O = GDP + phosphate + H(+). With respect to regulation, alternates between an inactive form bound to GDP and an active form bound to GTP. Inactivated by the TSC-TBC complex via the GTPase activating protein (GAP) domain of TSC2. Autoinhibited by Tyr-35, which constrains the active site conformation, restricting the access of the catalytic Asp-65 to the nucleotide-binding pocket. Small GTPase that acts as an allosteric activator of the canonical mTORC1 complex, an evolutionarily conserved central nutrient sensor that stimulates anabolic reactions and macromolecule biosynthesis to promote cellular biomass generation and growth. In response to nutrients, growth factors or amino acids, specifically activates the protein kinase activity of MTOR, the catalytic component of the mTORC1 complex: acts by causing a conformational change that allows the alignment of residues in the active site of MTOR, thereby enhancing the phosphorylation of ribosomal protein S6 kinase (RPS6KB1 and RPS6KB2) and EIF4EBP1 (4E-BP1). RHEB is also required for localization of the TSC-TBC complex to lysosomal membranes. In response to starvation, RHEB is inactivated by the TSC-TBC complex, preventing activation of mTORC1. Has low intrinsic GTPase activity. The polypeptide is GTP-binding protein Rheb (Rattus norvegicus (Rat)).